Reading from the N-terminus, the 1097-residue chain is DNA-directed RNA polymerase subunit beta (1097 aa).

The interval 1070 to 1097 is disordered; it reads LMQDVNPRRNTPSRPTYESLGTSEYEED. The span at 1077-1091 shows a compositional bias: polar residues; the sequence is RRNTPSRPTYESLGT.

Belongs to the RNA polymerase beta chain family. In cyanobacteria the RNAP catalytic core is composed of 2 alpha, 1 beta, 1 beta', 1 gamma and 1 omega subunit. When a sigma factor is associated with the core the holoenzyme is formed, which can initiate transcription.

It catalyses the reaction RNA(n) + a ribonucleoside 5'-triphosphate = RNA(n+1) + diphosphate. In terms of biological role, DNA-dependent RNA polymerase catalyzes the transcription of DNA into RNA using the four ribonucleoside triphosphates as substrates. This is DNA-directed RNA polymerase subunit beta from Prochlorococcus marinus (strain MIT 9515).